We begin with the raw amino-acid sequence, 326 residues long: Beta-ketoacyl-[acyl-carrier-protein] synthase III (326 aa).

Active-site residues include Cys-120 and His-253. Residues 254 to 258 form an ACP-binding region; that stretch reads QANIR. Residue Asn-283 is part of the active site.

The protein belongs to the thiolase-like superfamily. FabH family. In terms of assembly, homodimer.

The protein resides in the cytoplasm. It catalyses the reaction malonyl-[ACP] + acetyl-CoA + H(+) = 3-oxobutanoyl-[ACP] + CO2 + CoA. It functions in the pathway lipid metabolism; fatty acid biosynthesis. In terms of biological role, catalyzes the condensation reaction of fatty acid synthesis by the addition to an acyl acceptor of two carbons from malonyl-ACP. Catalyzes the first condensation reaction which initiates fatty acid synthesis and may therefore play a role in governing the total rate of fatty acid production. Possesses both acetoacetyl-ACP synthase and acetyl transacylase activities. Its substrate specificity determines the biosynthesis of branched-chain and/or straight-chain of fatty acids. In Cupriavidus necator (strain ATCC 17699 / DSM 428 / KCTC 22496 / NCIMB 10442 / H16 / Stanier 337) (Ralstonia eutropha), this protein is Beta-ketoacyl-[acyl-carrier-protein] synthase III.